We begin with the raw amino-acid sequence, 156 residues long: U4/U6.U5 small nuclear ribonucleoprotein 27 kDa protein (156 aa).

Residues 1–98 are disordered; it reads MGRSRSRSPE…IAAEDLEGKT (98 aa). The segment covering 13–59 has biased composition (basic residues); it reads RERRRSRSASRERERRRRERSRSRERRRSRSRSPHRRRSRSPRRHRS. Positions 66–98 are enriched in basic and acidic residues; that stretch reads RLKDRRDDDKKDSKESKGAKERQIAAEDLEGKT.

It belongs to the SNUT3 family. Part of a tri-snRNP complex.

The protein resides in the nucleus. In terms of biological role, may play a role in mRNA splicing. This chain is U4/U6.U5 small nuclear ribonucleoprotein 27 kDa protein (snrnp27), found in Xenopus tropicalis (Western clawed frog).